Here is a 251-residue protein sequence, read N- to C-terminus: 3-deoxy-manno-octulosonate cytidylyltransferase (251 aa).

This sequence belongs to the KdsB family.

It is found in the cytoplasm. The catalysed reaction is 3-deoxy-alpha-D-manno-oct-2-ulosonate + CTP = CMP-3-deoxy-beta-D-manno-octulosonate + diphosphate. It functions in the pathway nucleotide-sugar biosynthesis; CMP-3-deoxy-D-manno-octulosonate biosynthesis; CMP-3-deoxy-D-manno-octulosonate from 3-deoxy-D-manno-octulosonate and CTP: step 1/1. It participates in bacterial outer membrane biogenesis; lipopolysaccharide biosynthesis. Functionally, activates KDO (a required 8-carbon sugar) for incorporation into bacterial lipopolysaccharide in Gram-negative bacteria. The polypeptide is 3-deoxy-manno-octulosonate cytidylyltransferase (Chelativorans sp. (strain BNC1)).